Here is a 571-residue protein sequence, read N- to C-terminus: MAKLWFKFQRCFRYFRRKPVRFFTLLAIYLTAGSLVFLHSGFVGQPAVPQSQASPAAGSPVEGAELPFLGDLHLGRGFRDTVEASSIARRYGPTFKGKDTSERAKLGDYGGAWSRALKGRVVREKEKEKEEEKAKYIGCYLDDTQSRALRGVSFFDYKKMTVFRCQDNCAERGYLYAGLEFGAECYCGHKIQAANVSESDCDMECKGERGSVCGGINRLSVYRLQLAQESARRYGSAVFRGCFRRPNNLSLALPVSAAMPNMSVDKCVDLCTEKEFPLAALAGTACHCGFPTTRFPLHDREDEQLCAQKCSAEEFESCGTPSYFIVYQTQVQDNRCMDRRFLPAKSKKLIALASFPGAGNTWARHLIELATGFYTGSYYFDGSLYNKGFKGERDHWRSGRTICIKTHESGQKEIEAFDAAILLIRNPYKALMAEFNRKYGGHIGFAAHAHWKGKEWPEFVRNYAPWWATHTLDWLKFGKTVLVVHFEDLKQDLFTQLGRMVSLLGVAVREDRLLCVESQKDGNFKRSGLRKLEYDPYTAEMRRTIAAYIRMVDTALRSRNLTGVPDAYGPR.

Residues 1–20 (MAKLWFKFQRCFRYFRRKPV) are Cytoplasmic-facing. Residues 21–43 (RFFTLLAIYLTAGSLVFLHSGFV) form a helical membrane-spanning segment. At 44–571 (GQPAVPQSQA…TGVPDAYGPR (528 aa)) the chain is on the extracellular side. 2 consecutive WSC domains span residues 133–225 (KAKY…YRLQ) and 236–330 (SAVF…YQTQ). N-linked (GlcNAc...) asparagine glycosylation is found at N195 and N248.

This sequence belongs to the WSCD family.

The protein localises to the golgi apparatus membrane. In terms of biological role, sialate:O-sulfotransferase that catalyzes 8-O-sulfation at the Sia-glycan level using 3'-phosphoadenosine 5'-phosphosulfate (PAPS) as a donor, forming 8-O-sulfated Sia (Sia8S)-glycans. Displays selectivity toward glycoproteins such as TF/transferrin. This is Sialate:O-sulfotransferase 2 (Wscd2) from Mus musculus (Mouse).